Consider the following 208-residue polypeptide: Small ribosomal subunit protein eS1 (208 aa).

Belongs to the eukaryotic ribosomal protein eS1 family.

This Saccharolobus islandicus (strain Y.N.15.51 / Yellowstone #2) (Sulfolobus islandicus) protein is Small ribosomal subunit protein eS1.